Consider the following 394-residue polypeptide: Myb-like protein R (394 aa).

Transmembrane regions (helical) follow at residues 11 to 31 (IGAQ…EFII) and 99 to 119 (FFIG…LIIF). The Myb-like domain maps to 325-377 (GNWSLDEQKALMVEVSTLGNKSEINWFFISKQLFLKGISRNARECQRKHESIQ).

The protein localises to the membrane. This is Myb-like protein R (mybR) from Dictyostelium discoideum (Social amoeba).